A 202-amino-acid chain; its full sequence is Superoxide dismutase [Mn/Fe] (202 aa).

Fe(3+) contacts are provided by histidine 26, histidine 80, aspartate 163, and histidine 167. Residues histidine 26, histidine 80, aspartate 163, and histidine 167 each coordinate Mn(2+).

Belongs to the iron/manganese superoxide dismutase family. As to quaternary structure, homodimer. Requires Mn(2+) as cofactor. The cofactor is Fe(3+).

It catalyses the reaction 2 superoxide + 2 H(+) = H2O2 + O2. In terms of biological role, destroys superoxide anion radicals which are normally produced within the cells and which are toxic to biological systems. Catalyzes the dismutation of superoxide anion radicals into O2 and H2O2 by successive reduction and oxidation of the transition metal ion at the active site. This chain is Superoxide dismutase [Mn/Fe] (sodB), found in Methylomonas sp. (strain J).